A 383-amino-acid chain; its full sequence is Probable assembly chaperone of rpl4 (383 aa).

Positions 1 to 12 are enriched in basic residues; the sequence is MGKPRPHKKKAS. The tract at residues 1–33 is disordered; the sequence is MGKPRPHKKKASKTREKSVLSAGGSISKRKMNE. TPR repeat units lie at residues 35-68, 73-106, 116-147, and 193-226; these read PRKL…ATSN, LSSL…DPTG, AEKF…LRGI, and PEVL…WKDL. The disordered stretch occupies residues 345-383; it reads NKELGEEMEDDSNVEDGEGEGEEEWEGIESDSDHEMADS. Residues 350 to 374 show a composition bias toward acidic residues; sequence EEMEDDSNVEDGEGEGEEEWEGIES.

This sequence belongs to the ACL4 family.

Its subcellular location is the cytoplasm. It is found in the nucleus. Acts as a chaperone for the L4 ribosomal subunit, required for hierarchical ribosome assembly. Shields ribosomal protein L4 until timely release and insertion into the pre-ribosome is possible, once ribosomal protein L18 is present. The polypeptide is Probable assembly chaperone of rpl4 (Emericella nidulans (strain FGSC A4 / ATCC 38163 / CBS 112.46 / NRRL 194 / M139) (Aspergillus nidulans)).